We begin with the raw amino-acid sequence, 293 residues long: PHO85 cyclin PHO80 (293 aa).

Residues S234 and S267 each carry the phosphoserine; by PHO85 modification. Residues 254-272 (ESGSQTTQLKGSSSPNSHS) show a composition bias toward polar residues. The disordered stretch occupies residues 254–293 (ESGSQTTQLKGSSSPNSHSSQKRYSEAKDAHIYNKRSKPD). Residues 276–293 (RYSEAKDAHIYNKRSKPD) are compositionally biased toward basic and acidic residues.

The protein belongs to the cyclin family. PHO80 subfamily. In terms of assembly, forms a cyclin-CDK complex with PHO85. PHO80-PHO85 forms a stable complex with its inhibitor PHO81 under both high- and low-phosphate conditions, but PHO81 only inhibits the kinase upon phosphate starvation. Interacts with transcription factor PHO4. Post-translationally, phosphorylation of Ser-267 by PHO85 is required to form an active cyclin-kinase complex and for function.

The protein resides in the cytoplasm. It localises to the nucleus. Inhibited by the CDK inhibitor (CKI) PHO81 in response to phosphate starvation. Its function is as follows. Cyclin partner of the cyclin-dependent kinase (CDK) PHO85. Negatively regulates the expression of phosphate-starvation-responsive genes under phosphate-rich conditions. The PHO80-PHO85 cyclin-CDK holoenzyme phosphorylates and inactivates the transcription factor PHO4, by preventing its association with the transcription factor PHO2 and the nuclear import receptor PSE1, and by promoting association with the nuclear export receptor MSN5, excluding PHO4 from the nucleus. PHO80-PHO85 phosphorylates and inactivates protein kinase RIM15 by retaining it in the cytoplasm, antagonizing RIM15-induced entry into stationary phase. PHO80-PHO85 also phosphorylates and inactivates the calcineurin-responsive transcription factor CRZ1, linking PHO85 to calcium signaling. The protein is PHO85 cyclin PHO80 (PHO80) of Saccharomyces cerevisiae (strain ATCC 204508 / S288c) (Baker's yeast).